The primary structure comprises 78 residues: Large ribosomal subunit protein bL28 (78 aa).

The protein belongs to the bacterial ribosomal protein bL28 family.

The sequence is that of Large ribosomal subunit protein bL28 from Klebsiella pneumoniae (strain 342).